A 168-amino-acid chain; its full sequence is 2-C-methyl-D-erythritol 2,4-cyclodiphosphate synthase (168 aa).

A divalent metal cation contacts are provided by Asp-8 and His-10. Residues 8-10 and 34-35 each bind 4-CDP-2-C-methyl-D-erythritol 2-phosphate; these read DLH and HS. His-42 lines the a divalent metal cation pocket. 4-CDP-2-C-methyl-D-erythritol 2-phosphate is bound by residues 56–58, 61–65, 132–135, and Arg-142; these read DIG, FPDTD, and TTTE.

It belongs to the IspF family. In terms of assembly, homotrimer. The cofactor is a divalent metal cation.

The enzyme catalyses 4-CDP-2-C-methyl-D-erythritol 2-phosphate = 2-C-methyl-D-erythritol 2,4-cyclic diphosphate + CMP. It functions in the pathway isoprenoid biosynthesis; isopentenyl diphosphate biosynthesis via DXP pathway; isopentenyl diphosphate from 1-deoxy-D-xylulose 5-phosphate: step 4/6. Its function is as follows. Involved in the biosynthesis of isopentenyl diphosphate (IPP) and dimethylallyl diphosphate (DMAPP), two major building blocks of isoprenoid compounds. Catalyzes the conversion of 4-diphosphocytidyl-2-C-methyl-D-erythritol 2-phosphate (CDP-ME2P) to 2-C-methyl-D-erythritol 2,4-cyclodiphosphate (ME-CPP) with a corresponding release of cytidine 5-monophosphate (CMP). The chain is 2-C-methyl-D-erythritol 2,4-cyclodiphosphate synthase from Desulfosudis oleivorans (strain DSM 6200 / JCM 39069 / Hxd3) (Desulfococcus oleovorans).